The following is a 779-amino-acid chain: Ribonucleoside-diphosphate reductase large subunit (779 aa).

Substrate is bound by residues Ser-178, 193–194 (SC), Gly-222, 420–424 (NLCIE), and 614–618 (PTATS). An intrachain disulfide couples Cys-194 to Cys-440. The active-site Proton acceptor is the Asn-420. Cys-422 (cysteine radical intermediate) is an active-site residue. The Proton acceptor role is filled by Glu-424.

It belongs to the ribonucleoside diphosphate reductase large chain family. As to quaternary structure, heterotetramer composed of a homodimer of the large subunit (R1) and a homodimer of the small subunit (R2). Larger multisubunit protein complex are also active, composed of (R1)n(R2)n.

It carries out the reaction a 2'-deoxyribonucleoside 5'-diphosphate + [thioredoxin]-disulfide + H2O = a ribonucleoside 5'-diphosphate + [thioredoxin]-dithiol. With respect to regulation, under complex allosteric control mediated by deoxynucleoside triphosphates and ATP binding. The type of nucleotide bound at the specificity site determines substrate preference. It seems probable that ATP makes the enzyme reduce CDP and UDP, dGTP favors ADP reduction and dTTP favors GDP reduction. In terms of biological role, ribonucleoside-diphosphate reductase holoenzyme provides the precursors necessary for viral DNA synthesis. Allows virus growth in non-dividing cells. Catalyzes the biosynthesis of deoxyribonucleotides from the corresponding ribonucleotides. The chain is Ribonucleoside-diphosphate reductase large subunit from African swine fever virus (isolate Tick/Malawi/Lil 20-1/1983) (ASFV).